Consider the following 352-residue polypeptide: N-acetyl-gamma-glutamyl-phosphate reductase (352 aa).

C155 is an active-site residue.

This sequence belongs to the NAGSA dehydrogenase family. Type 1 subfamily.

It is found in the cytoplasm. It carries out the reaction N-acetyl-L-glutamate 5-semialdehyde + phosphate + NADP(+) = N-acetyl-L-glutamyl 5-phosphate + NADPH + H(+). It participates in amino-acid biosynthesis; L-arginine biosynthesis; N(2)-acetyl-L-ornithine from L-glutamate: step 3/4. Catalyzes the NADPH-dependent reduction of N-acetyl-5-glutamyl phosphate to yield N-acetyl-L-glutamate 5-semialdehyde. The chain is N-acetyl-gamma-glutamyl-phosphate reductase from Synechococcus elongatus (strain ATCC 33912 / PCC 7942 / FACHB-805) (Anacystis nidulans R2).